A 1038-amino-acid chain; its full sequence is Dorsal-ventral patterning protein Sog (1038 aa).

Topologically, residues 1 to 53 are cytoplasmic; sequence MANKLRKSNAIEWATATGTVPLLERSCCHSEDAALEPQASKTSHREQAPILRH. Residues 54–74 traverse the membrane as a helical; Signal-anchor for type II membrane protein segment; the sequence is LSQLSHLLIIAGLLIVCLAGV. The Extracellular portion of the chain corresponds to 75 to 1038; sequence TEGRRHAPLM…QPHHQQRSSS (964 aa). The VWFC 1 domain occupies 100–175; it reads TECQFGKVLR…LPGKCCKTCP (76 aa). N179 and N287 each carry an N-linked (GlcNAc...) asparagine glycan. CHRD domains are found at residues 197–337, 339–471, 474–588, and 592–713; these read NMKH…KYTA, QTEL…TRAS, IFQT…PRPV, and RDSA…STKV. 4 N-linked (GlcNAc...) asparagine glycosylation sites follow: N520, N666, N752, and N821. Positions 742 to 804 constitute a VWFC 2 domain; that stretch reads TKCFHSGRFY…RDGECCPSCV (63 aa). VWFC domains lie at 830–899 and 939–1020; these read RGCR…KICP and GGCK…TQCR.

This sequence belongs to the chordin family. In terms of assembly, component of a complex composed of dpp, sog and tsg. Interacts with palmitoyltransferase Hip14. In terms of processing, palmitoylated, probably by Hip14. Post-translationally, cleaved by metalloproteases tok and tld. Cleavage by tok during pupal development contributes to specification of the posterior crossvein in the wing. Abuts the dorsal dpp-expressing cells in a lateral stripe 14-16 cells wide. Later in embryogenesis it is expressed in neuroectoderm and in the endoderm spaced along the anterior-posterior axis of the developing gut.

The protein resides in the golgi apparatus membrane. The protein localises to the cell membrane. It is found in the secreted. Functionally, putative negative growth factor. Antagonist of dpp, a protein involved in patterning the dorsal region and in the development of the neuroectoderm; dpp inhibition is enhanced by tsg. Required for establishment of a narrow stripe of peak levels of BMP signaling in the dorsal midline of early embryos, that will give rise to the amnioserosa. During pupal development, plays a role in specification of the posterior crossvein in the wing. Exhibits both agonist and antagonist activities towards BMP signaling during pupal wing patterning. The sequence is that of Dorsal-ventral patterning protein Sog (sog) from Drosophila melanogaster (Fruit fly).